A 154-amino-acid chain; its full sequence is Endoribonuclease YbeY (154 aa).

Positions 117, 121, and 127 each coordinate Zn(2+).

Belongs to the endoribonuclease YbeY family. The cofactor is Zn(2+).

It is found in the cytoplasm. Single strand-specific metallo-endoribonuclease involved in late-stage 70S ribosome quality control and in maturation of the 3' terminus of the 16S rRNA. This Aromatoleum aromaticum (strain DSM 19018 / LMG 30748 / EbN1) (Azoarcus sp. (strain EbN1)) protein is Endoribonuclease YbeY.